The chain runs to 179 residues: Natural killer cells antigen CD94 (179 aa).

Residues methionine 1–asparagine 10 are Cytoplasmic-facing. Residues leucine 11 to leucine 31 traverse the membrane as a helical; Signal-anchor for type II membrane protein segment. Topologically, residues lysine 32 to methionine 179 are extracellular. 4 cysteine pairs are disulfide-bonded: cysteine 58-cysteine 70, cysteine 61-cysteine 72, cysteine 89-cysteine 174, and cysteine 152-cysteine 166. Residues histidine 68 to lysine 175 enclose the C-type lectin domain. Residues asparagine 93 and asparagine 125 are each glycosylated (N-linked (GlcNAc...) asparagine).

As to quaternary structure, can form disulfide-bonded heterodimer with NKG2 family members KLRC1 and KLRC2. KLRD1-KLRC1 heterodimer interacts with peptide-bound MHC-E-B2M heterotrimeric complex. KLRD1 plays a prominent role in directly interacting with MHC-E. KLRD1-KLRC1 interacts with much higher affinity with peptide-bound MHC-E-B2M than KLRD1-KLRC2. Interacts with the adapter protein TYROBP/DAP12; this interaction is required for cell surface expression and cell activation.

The protein localises to the cell membrane. Functionally, immune receptor involved in self-nonself discrimination. In complex with KLRC1 or KLRC2 on cytotoxic and regulatory lymphocyte subsets, recognizes non-classical major histocompatibility (MHC) class Ib molecule MHC-E loaded with self-peptides derived from the signal sequence of classical MHC class Ia and non-classical MHC class Ib molecules. Enables cytotoxic cells to monitor the expression of MHC class I molecules in healthy cells and to tolerate self. Primarily functions as a ligand binding subunit as it lacks the capacity to signal. KLRD1-KLRC1 acts as an immune inhibitory receptor. Key inhibitory receptor on natural killer (NK) cells that regulates their activation and effector functions. Dominantly counteracts T cell receptor signaling on a subset of memory/effector CD8-positive T cells as part of an antigen-driven response to avoid autoimmunity. On intraepithelial CD8-positive gamma-delta regulatory T cells triggers TGFB1 secretion, which in turn limits the cytotoxic programming of intraepithelial CD8-positive alpha-beta T cells, distinguishing harmless from pathogenic antigens. In MHC-E-rich tumor microenvironment, acts as an immune inhibitory checkpoint and may contribute to progressive loss of effector functions of NK cells and tumor-specific T cells, a state known as cell exhaustion. Upon MHC-E-peptide binding, transmits intracellular signals through KLRC1 immunoreceptor tyrosine-based inhibition motifs (ITIMs) by recruiting INPP5D/SHIP-1 and INPPL1/SHIP-2 tyrosine phosphatases to ITIMs, and ultimately opposing signals transmitted by activating receptors through dephosphorylation of proximal signaling molecules. Its function is as follows. KLRD1-KLRC2 acts as an immune activating receptor. On cytotoxic lymphocyte subsets recognizes MHC-E loaded with signal sequence-derived peptides from non-classical MHC class Ib MHC-G molecules, likely playing a role in the generation and effector functions of adaptive NK cells and in maternal-fetal tolerance during pregnancy. Regulates the effector functions of terminally differentiated cytotoxic lymphocyte subsets, and in particular may play a role in adaptive NK cell response to viral infection. Upon MHC-E-peptide binding, transmits intracellular signals via the adapter protein TYROBP/DAP12, triggering the phosphorylation of proximal signaling molecules and cell activation. The sequence is that of Natural killer cells antigen CD94 (KLRD1) from Canis lupus familiaris (Dog).